A 192-amino-acid polypeptide reads, in one-letter code: Imidazole glycerol phosphate synthase subunit HisH (192 aa).

One can recognise a Glutamine amidotransferase type-1 domain in the interval 1 to 192; it reads MIVIVDYGLG…QAIQGGFIND (192 aa). Residue cysteine 77 is the Nucleophile of the active site. Residues histidine 169 and glutamate 171 contribute to the active site.

Heterodimer of HisH and HisF.

Its subcellular location is the cytoplasm. The enzyme catalyses 5-[(5-phospho-1-deoxy-D-ribulos-1-ylimino)methylamino]-1-(5-phospho-beta-D-ribosyl)imidazole-4-carboxamide + L-glutamine = D-erythro-1-(imidazol-4-yl)glycerol 3-phosphate + 5-amino-1-(5-phospho-beta-D-ribosyl)imidazole-4-carboxamide + L-glutamate + H(+). It carries out the reaction L-glutamine + H2O = L-glutamate + NH4(+). The protein operates within amino-acid biosynthesis; L-histidine biosynthesis; L-histidine from 5-phospho-alpha-D-ribose 1-diphosphate: step 5/9. Its function is as follows. IGPS catalyzes the conversion of PRFAR and glutamine to IGP, AICAR and glutamate. The HisH subunit catalyzes the hydrolysis of glutamine to glutamate and ammonia as part of the synthesis of IGP and AICAR. The resulting ammonia molecule is channeled to the active site of HisF. The sequence is that of Imidazole glycerol phosphate synthase subunit HisH from Staphylococcus aureus (strain COL).